The following is a 286-amino-acid chain: MNLKHKWDVYSRLTRLDRPIGTLLLLWPCLMALVLAAGGMPDLKVLIIFIIGVVIMRACGCIINDYADRDLDSHVERTKSRPLASGEISTKEALLLFVILGLAAFGLVLLLNGLVVKLSVVGIILTIIYPFTKRVTNMPQMFLGVVWSWSIPMAYAAQTGEVPIEAWWLFAANWFWTVAYDTMYAMVDRDDDLKIGIKSTAILFGKYDRQIIGLFQIAALFCFVAAGWSADRGLVYGLGLLTFVGFSTYQQMLIFGRERAPCFKAFLNNNWAGLVLFVSLGADYLF.

8 helical membrane-spanning segments follow: residues 20–40 (IGTL…AGGM), 43–63 (LKVL…GCII), 96–116 (LFVI…GLVV), 142–162 (FLGV…TGEV), 167–187 (WWLF…YAMV), 210–230 (QIIG…GWSA), 235–255 (VYGL…MLIF), and 266–286 (FLNN…DYLF).

Belongs to the UbiA prenyltransferase family. Requires Mg(2+) as cofactor.

The protein localises to the cell inner membrane. It catalyses the reaction all-trans-octaprenyl diphosphate + 4-hydroxybenzoate = 4-hydroxy-3-(all-trans-octaprenyl)benzoate + diphosphate. Its pathway is cofactor biosynthesis; ubiquinone biosynthesis. Its function is as follows. Catalyzes the prenylation of para-hydroxybenzoate (PHB) with an all-trans polyprenyl group. Mediates the second step in the final reaction sequence of ubiquinone-8 (UQ-8) biosynthesis, which is the condensation of the polyisoprenoid side chain with PHB, generating the first membrane-bound Q intermediate 3-octaprenyl-4-hydroxybenzoate. This is 4-hydroxybenzoate octaprenyltransferase from Shewanella oneidensis (strain ATCC 700550 / JCM 31522 / CIP 106686 / LMG 19005 / NCIMB 14063 / MR-1).